The primary structure comprises 107 residues: Acidic phospholipase A2 2 (107 aa).

Intrachain disulfides connect cysteine 26–cysteine 100, cysteine 28–cysteine 38, cysteine 37–cysteine 82, cysteine 43–cysteine 107, cysteine 44–cysteine 75, and cysteine 62–cysteine 73. Residues tyrosine 27, glycine 29, and glycine 31 each contribute to the Ca(2+) site. Histidine 41 is an active-site residue. Ca(2+) is bound at residue aspartate 42. Aspartate 76 is an active-site residue.

Ca(2+) is required as a cofactor. Expressed by the venom gland.

The protein localises to the secreted. It catalyses the reaction a 1,2-diacyl-sn-glycero-3-phosphocholine + H2O = a 1-acyl-sn-glycero-3-phosphocholine + a fatty acid + H(+). PLA2 catalyzes the calcium-dependent hydrolysis of the 2-acyl groups in 3-sn-phosphoglycerides. In Bothrops insularis (Golden lancehead), this protein is Acidic phospholipase A2 2.